A 310-amino-acid chain; its full sequence is D-alanyl-D-alanine endopeptidase (310 aa).

The first 23 residues, 1-23, serve as a signal peptide directing secretion; that stretch reads MRNRLLSLVTLFLSLSVATAVSA. Serine 66 (acyl-ester intermediate) is an active-site residue. The active-site Proton acceptor is lysine 69. Residue serine 123 is part of the active site. Lysine 230 is a binding site for substrate.

The protein belongs to the peptidase S11 family.

It localises to the periplasm. In terms of biological role, cell wall formation. The polypeptide is D-alanyl-D-alanine endopeptidase (pbpG) (Pseudomonas aeruginosa (strain ATCC 15692 / DSM 22644 / CIP 104116 / JCM 14847 / LMG 12228 / 1C / PRS 101 / PAO1)).